The chain runs to 210 residues: Probable membrane protein MT1774 (210 aa).

2 helical membrane passes run 43 to 63 and 165 to 185; these read AVVMLLAVTVSLLTIPFAAAA and ALAALGLWLSVAAVAGALLAL.

The protein localises to the cell membrane. This Mycobacterium tuberculosis (strain CDC 1551 / Oshkosh) protein is Probable membrane protein MT1774.